The primary structure comprises 260 residues: Flagellar basal-body rod protein FlgG (260 aa).

Belongs to the flagella basal body rod proteins family. As to quaternary structure, the basal body constitutes a major portion of the flagellar organelle and consists of four rings (L,P,S, and M) mounted on a central rod. The rod consists of about 26 subunits of FlgG in the distal portion, and FlgB, FlgC and FlgF are thought to build up the proximal portion of the rod with about 6 subunits each.

It is found in the bacterial flagellum basal body. This Salmonella typhi protein is Flagellar basal-body rod protein FlgG (flgG).